The chain runs to 147 residues: Ubiquitin-conjugating enzyme E2 D1 (147 aa).

The region spanning 1–147 (MALKRIQKEL…AREWTQKYAM (147 aa)) is the UBC core domain. The active-site Glycyl thioester intermediate is the C85.

Belongs to the ubiquitin-conjugating enzyme family. Component of a E3 ubiquitin ligase complex containing UBE2D1, SIAH1, CACYBP/SIP, SKP1, APC and TBL1X. Interacts with RNF11. Post-translationally, autoubiquitinated.

The protein resides in the cytoplasm. The enzyme catalyses S-ubiquitinyl-[E1 ubiquitin-activating enzyme]-L-cysteine + [E2 ubiquitin-conjugating enzyme]-L-cysteine = [E1 ubiquitin-activating enzyme]-L-cysteine + S-ubiquitinyl-[E2 ubiquitin-conjugating enzyme]-L-cysteine.. It carries out the reaction S-ubiquitinyl-[E1 ubiquitin-activating enzyme]-L-cysteine + [acceptor protein]-L-lysine = [E1 ubiquitin-activating enzyme]-L-cysteine + N(6)-monoubiquitinyl-[acceptor protein]-L-lysine.. Its pathway is protein modification; protein ubiquitination. Accepts ubiquitin from the E1 complex and catalyzes its covalent attachment to other proteins. In vitro catalyzes 'Lys-48'-linked polyubiquitination. Mediates the selective degradation of short-lived and abnormal proteins. Functions in the E6/E6-AP-induced ubiquitination of p53/TP53. Mediates ubiquitination of PEX5 and auto-ubiquitination of STUB1, TRAF6 and TRIM63/MURF1. Ubiquitinates STUB1-associated HSP90AB1 in vitro. Lacks inherent specificity for any particular lysine residue of ubiquitin. Essential for viral activation of IRF3. Mediates polyubiquitination of CYP3A4. The protein is Ubiquitin-conjugating enzyme E2 D1 (UBE2D1) of Bos taurus (Bovine).